Here is a 553-residue protein sequence, read N- to C-terminus: Methyl-coenzyme M reductase I subunit alpha (553 aa).

A coenzyme F430-binding site is contributed by Gln150. Residues Arg228, 259-260 (KH), and Arg273 each bind coenzyme B. Position 274 is a 5-methylarginine (Arg274). Residues Tyr335 and Tyr447 each contribute to the coenzyme M site.

This sequence belongs to the methyl-coenzyme M reductase alpha subunit family. As to quaternary structure, MCR is a hexamer of two alpha, two beta, and two gamma chains, forming a dimer of heterotrimers. Coenzyme F430 is required as a cofactor. Is methylated on C5 of Arg-274 by the methyltransferase MJ0841. This post-translational methylation, despite being not essential in vivo, plays a role for the stability and structural integrity of MCR.

Its subcellular location is the cytoplasm. The catalysed reaction is coenzyme B + methyl-coenzyme M = methane + coenzyme M-coenzyme B heterodisulfide. The protein operates within one-carbon metabolism; methyl-coenzyme M reduction; methane from methyl-coenzyme M: step 1/1. Its function is as follows. Component of the methyl-coenzyme M reductase (MCR) I that catalyzes the reductive cleavage of methyl-coenzyme M (CoM-S-CH3 or 2-(methylthio)ethanesulfonate) using coenzyme B (CoB or 7-mercaptoheptanoylthreonine phosphate) as reductant which results in the production of methane and the mixed heterodisulfide of CoB and CoM (CoM-S-S-CoB). This is the final step in methanogenesis. This is Methyl-coenzyme M reductase I subunit alpha (mcrA) from Methanocaldococcus jannaschii (strain ATCC 43067 / DSM 2661 / JAL-1 / JCM 10045 / NBRC 100440) (Methanococcus jannaschii).